The chain runs to 285 residues: Bifunctional protein FolD 2 (285 aa).

NADP(+)-binding positions include Gly164–Ser166, Ser189, and Val230.

The protein belongs to the tetrahydrofolate dehydrogenase/cyclohydrolase family. In terms of assembly, homodimer.

The catalysed reaction is (6R)-5,10-methylene-5,6,7,8-tetrahydrofolate + NADP(+) = (6R)-5,10-methenyltetrahydrofolate + NADPH. It carries out the reaction (6R)-5,10-methenyltetrahydrofolate + H2O = (6R)-10-formyltetrahydrofolate + H(+). It functions in the pathway one-carbon metabolism; tetrahydrofolate interconversion. Catalyzes the oxidation of 5,10-methylenetetrahydrofolate to 5,10-methenyltetrahydrofolate and then the hydrolysis of 5,10-methenyltetrahydrofolate to 10-formyltetrahydrofolate. In Geobacter sulfurreducens (strain ATCC 51573 / DSM 12127 / PCA), this protein is Bifunctional protein FolD 2.